Here is a 456-residue protein sequence, read N- to C-terminus: SWI/SNF complex component SNF12 homolog (456 aa).

An SWIB/MDM2 domain is found at 234–310 (HVPQKYKVLG…PQLLREHLSP (77 aa)). A disordered region spans residues 435–456 (KQTTPNPTPQQISMAPSTPQTP).

It belongs to the SMARCD family. In terms of assembly, part of a SWI-SNF complex.

Its subcellular location is the nucleus. Functionally, involved in transcriptional activation and repression of select genes by chromatin remodeling (alteration of DNA-nucleosome topology). The polypeptide is SWI/SNF complex component SNF12 homolog (snf12-1) (Dictyostelium discoideum (Social amoeba)).